Here is a 195-residue protein sequence, read N- to C-terminus: Imidazoleglycerol-phosphate dehydratase (195 aa).

It belongs to the imidazoleglycerol-phosphate dehydratase family.

Its subcellular location is the cytoplasm. The enzyme catalyses D-erythro-1-(imidazol-4-yl)glycerol 3-phosphate = 3-(imidazol-4-yl)-2-oxopropyl phosphate + H2O. It participates in amino-acid biosynthesis; L-histidine biosynthesis; L-histidine from 5-phospho-alpha-D-ribose 1-diphosphate: step 6/9. In Burkholderia mallei (strain NCTC 10247), this protein is Imidazoleglycerol-phosphate dehydratase.